The primary structure comprises 126 residues: 13 kDa ribonucleoprotein-associated protein (126 aa).

The protein belongs to the eukaryotic ribosomal protein eL8 family. Component of the U3 snoRNP particle. Binds to the C'/D and B/C motifs in U3 snoRNA. Component of the 25S U4/U6.U5 tri-snRNP particle, a subcomplex of the spliceosome. Binds to the 5' stem-loop of U4 snRNA.

Its subcellular location is the nucleus. It localises to the nucleolus. Common component of the spliceosome and rRNA processing machinery. In association with the spliceosomal U4/U6.U5 tri-snRNP particle, required for splicing of pre-mRNA. In association with box C/D snoRNPs, required for processing of pre-ribosomal RNA (rRNA) and site-specific 2'-O-methylation of substrate RNAs. Essential for the accumulation and stability of U4 snRNA, U6 snRNA, and box C/D snoRNAs. The polypeptide is 13 kDa ribonucleoprotein-associated protein (SNU13) (Kluyveromyces lactis (strain ATCC 8585 / CBS 2359 / DSM 70799 / NBRC 1267 / NRRL Y-1140 / WM37) (Yeast)).